Here is a 550-residue protein sequence, read N- to C-terminus: GMP synthase [glutamine-hydrolyzing] (550 aa).

A Glutamine amidotransferase type-1 domain is found at 39 to 232 (RILILDFGSQ…VHKICGCGGL (194 aa)). Cysteine 116 acts as the Nucleophile in catalysis. Catalysis depends on residues histidine 206 and glutamate 208. The GMPS ATP-PPase domain maps to 233–425 (WTPEHIIDLR…LGLPHSMIYR (193 aa)). 260–266 (SGGVDSS) serves as a coordination point for ATP.

As to quaternary structure, homodimer.

It carries out the reaction XMP + L-glutamine + ATP + H2O = GMP + L-glutamate + AMP + diphosphate + 2 H(+). The protein operates within purine metabolism; GMP biosynthesis; GMP from XMP (L-Gln route): step 1/1. Catalyzes the synthesis of GMP from XMP. This is GMP synthase [glutamine-hydrolyzing] from Acinetobacter baylyi (strain ATCC 33305 / BD413 / ADP1).